Consider the following 574-residue polypeptide: Septation ring formation regulator EzrA (574 aa).

Residues 1–7 (MSSGIVL) are Extracellular-facing. Residues 8–26 (LIVAIVLVVIIAYLIAIII) form a helical membrane-spanning segment. At 27 to 574 (RKRNDSLITK…YEKTRETIRF (548 aa)) the chain is on the cytoplasmic side. Coiled-coil stretches lie at residues 102 to 141 (NFIR…EEKN), 255 to 368 (KNIE…KDVL), and 409 to 495 (LKNI…EETA).

The protein belongs to the EzrA family.

The protein resides in the cell membrane. Negative regulator of FtsZ ring formation; modulates the frequency and position of FtsZ ring formation. Inhibits FtsZ ring formation at polar sites. Interacts either with FtsZ or with one of its binding partners to promote depolymerization. This is Septation ring formation regulator EzrA from Streptococcus mutans serotype c (strain ATCC 700610 / UA159).